The following is a 227-amino-acid chain: Ribose-5-phosphate isomerase A (227 aa).

Residues 26 to 29 (TGST), 82 to 85 (DGAD), and 95 to 98 (KGGG) contribute to the substrate site. Glu-104 functions as the Proton acceptor in the catalytic mechanism. Position 122 (Lys-122) interacts with substrate.

Belongs to the ribose 5-phosphate isomerase family. Homodimer.

The enzyme catalyses aldehydo-D-ribose 5-phosphate = D-ribulose 5-phosphate. Its pathway is carbohydrate degradation; pentose phosphate pathway; D-ribose 5-phosphate from D-ribulose 5-phosphate (non-oxidative stage): step 1/1. Catalyzes the reversible conversion of ribose-5-phosphate to ribulose 5-phosphate. The polypeptide is Ribose-5-phosphate isomerase A (Streptococcus pneumoniae (strain ATCC 700669 / Spain 23F-1)).